The sequence spans 186 residues: Lipid A acyltransferase PagP (186 aa).

The signal sequence occupies residues 1–19 (MKRLISCLTIICALNRSAA). Active-site residues include His60, Asp103, and Ser104.

It belongs to the lipid A palmitoyltransferase family. In terms of assembly, homodimer.

It is found in the cell outer membrane. The catalysed reaction is a lipid A + a 1,2-diacyl-sn-glycero-3-phosphocholine = a hepta-acyl lipid A + a 2-acyl-sn-glycero-3-phosphocholine. The enzyme catalyses a lipid IVA + a 1,2-diacyl-sn-glycero-3-phosphocholine = a lipid IVB + a 2-acyl-sn-glycero-3-phosphocholine. It carries out the reaction a lipid IIA + a 1,2-diacyl-sn-glycero-3-phosphocholine = a lipid IIB + a 2-acyl-sn-glycero-3-phosphocholine. Functionally, transfers a fatty acid residue from the sn-1 position of a phospholipid to the N-linked hydroxyfatty acid chain on the proximal unit of lipid A or its precursors. Confers resistance to cationic antimicrobial peptides (CAMPs). Promotes the ability of L.pneumophila to replicate and/or survive in macrophages. Important for ability to kill macrophages and to promote the virulence. This chain is Lipid A acyltransferase PagP, found in Legionella pneumophila.